The primary structure comprises 187 residues: Peptide deformylase 2 (187 aa).

Fe cation contacts are provided by Cys-107 and His-149. Glu-150 is an active-site residue. A Fe cation-binding site is contributed by His-153.

The protein belongs to the polypeptide deformylase family. The cofactor is Fe(2+).

The catalysed reaction is N-terminal N-formyl-L-methionyl-[peptide] + H2O = N-terminal L-methionyl-[peptide] + formate. Functionally, removes the formyl group from the N-terminal Met of newly synthesized proteins. Requires at least a dipeptide for an efficient rate of reaction. N-terminal L-methionine is a prerequisite for activity but the enzyme has broad specificity at other positions. This Gloeobacter violaceus (strain ATCC 29082 / PCC 7421) protein is Peptide deformylase 2.